We begin with the raw amino-acid sequence, 338 residues long: GTPase Obg (338 aa).

The 159-residue stretch at 1-159 (MSFIDEVKIN…RWIRMELKLM (159 aa)) folds into the Obg domain. The disordered stretch occupies residues 58–79 (DLRQHPHQKAGRGKNGMGSDRH). In terms of domain architecture, OBG-type G spans 160-331 (ADVGLLGMPS…LLDDIAFNLW (172 aa)). Residues 166–173 (GMPSVGKS), 191–195 (FTTLK), 213–216 (DIPG), 283–286 (NKID), and 312–314 (SAA) contribute to the GTP site. Residues serine 173 and threonine 193 each coordinate Mg(2+).

Belongs to the TRAFAC class OBG-HflX-like GTPase superfamily. OBG GTPase family. In terms of assembly, monomer. The cofactor is Mg(2+).

Its subcellular location is the cytoplasm. In terms of biological role, an essential GTPase which binds GTP, GDP and possibly (p)ppGpp with moderate affinity, with high nucleotide exchange rates and a fairly low GTP hydrolysis rate. Plays a role in control of the cell cycle, stress response, ribosome biogenesis and in those bacteria that undergo differentiation, in morphogenesis control. This chain is GTPase Obg, found in Citrifermentans bemidjiense (strain ATCC BAA-1014 / DSM 16622 / JCM 12645 / Bem) (Geobacter bemidjiensis).